The primary structure comprises 291 residues: Protease HtpX homolog (291 aa).

The next 2 membrane-spanning stretches (helical) occupy residues 4-24 (ILLF…VASL) and 39-59 (SALL…SLLI). Residue H144 coordinates Zn(2+). E145 is an active-site residue. Residue H148 coordinates Zn(2+). 2 helical membrane passes run 159-179 (LIQG…GYAV) and 199-219 (VSTI…VAWF). E224 lines the Zn(2+) pocket.

Belongs to the peptidase M48B family. Zn(2+) is required as a cofactor.

It localises to the cell inner membrane. The chain is Protease HtpX homolog from Polaromonas naphthalenivorans (strain CJ2).